The primary structure comprises 318 residues: L-lactate dehydrogenase (318 aa).

NAD(+)-binding positions include Val-18, Asp-39, Lys-44, Tyr-69, and Gly-83–Ala-84. Gln-86 and Arg-92 together coordinate substrate. NAD(+) contacts are provided by residues Ser-105, Val-122 to Asn-124, and Ser-147. A substrate-binding site is contributed by Asn-124–Asp-127. Position 152 to 155 (Asp-152 to Arg-155) interacts with substrate. The active-site Proton acceptor is His-179. Tyr-225 bears the Phosphotyrosine mark. Residue Thr-234 coordinates substrate.

This sequence belongs to the LDH/MDH superfamily. LDH family. Homotetramer.

Its subcellular location is the cytoplasm. It carries out the reaction (S)-lactate + NAD(+) = pyruvate + NADH + H(+). It functions in the pathway fermentation; pyruvate fermentation to lactate; (S)-lactate from pyruvate: step 1/1. Functionally, catalyzes the conversion of lactate to pyruvate. This is L-lactate dehydrogenase from Clostridium botulinum (strain 657 / Type Ba4).